We begin with the raw amino-acid sequence, 173 residues long: Ribonuclease P/MRP protein subunit POP5 (173 aa).

It belongs to the eukaryotic/archaeal RNase P protein component 2 family. In terms of assembly, component of nuclear RNase P and RNase MRP complexes. RNase P consists of an RNA moiety and at least 9 protein subunits including POP1, POP3, POP4, POP5, POP6, POP7, POP8, RPP1 and RPR2. RNase MRP complex consists of an RNA moiety and at least 10 protein subunits including POP1, POP3, POP4, POP5, POP6, POP7, POP8, RMP1, RPP1 and SNM1, many of which are shared with the RNase P complex.

It localises to the cytoplasm. It is found in the nucleus. It catalyses the reaction Endonucleolytic cleavage of RNA, removing 5'-extranucleotides from tRNA precursor.. Its function is as follows. Component of ribonuclease P, a protein complex that generates mature tRNA molecules by cleaving their 5'-ends. Also a component of RNase MRP, which cleaves pre-rRNA sequences. This Saccharomyces cerevisiae (strain ATCC 204508 / S288c) (Baker's yeast) protein is Ribonuclease P/MRP protein subunit POP5 (POP5).